The primary structure comprises 305 residues: Putative lipid kinase SaurJH9_0749 (305 aa).

A DAGKc domain is found at 3 to 139 (NKYTHGVLFY…YDVIKINNQY (137 aa)). ATP contacts are provided by residues Ser44, 74 to 80 (GDGTVNE), and Thr101. Mg(2+) contacts are provided by Ser220, Asp223, and Glu225. Glu281 (proton acceptor) is an active-site residue.

This sequence belongs to the diacylglycerol/lipid kinase family. Requires Mg(2+) as cofactor.

Functionally, may catalyze the ATP-dependent phosphorylation of lipids other than diacylglycerol (DAG). The polypeptide is Putative lipid kinase SaurJH9_0749 (Staphylococcus aureus (strain JH9)).